Reading from the N-terminus, the 265-residue chain is Phosphonates import ATP-binding protein PhnC 1 (265 aa).

Residues 3–247 (LRLSGIELRH…HLDTLYANEQ (245 aa)) enclose the ABC transporter domain. 36–43 (GPSGAGKT) provides a ligand contact to ATP. Residues 245-265 (NEQLSPQPAPDVSETPWTPRC) are disordered.

Belongs to the ABC transporter superfamily. Phosphonates importer (TC 3.A.1.9.1) family. As to quaternary structure, the complex is composed of two ATP-binding proteins (PhnC), two transmembrane proteins (PhnE) and a solute-binding protein (PhnD).

The protein localises to the cell inner membrane. The enzyme catalyses phosphonate(out) + ATP + H2O = phosphonate(in) + ADP + phosphate + H(+). Its function is as follows. Part of the ABC transporter complex PhnCDE involved in phosphonates import. Responsible for energy coupling to the transport system. This chain is Phosphonates import ATP-binding protein PhnC 1, found in Pseudomonas savastanoi pv. phaseolicola (strain 1448A / Race 6) (Pseudomonas syringae pv. phaseolicola (strain 1448A / Race 6)).